The chain runs to 409 residues: D-galactonate dehydratase family member Achl_0790 (409 aa).

Mg(2+) is bound at residue Asp-217. His-219 is a D-arabinonate binding site. Residues Glu-243 and Glu-269 each contribute to the Mg(2+) site. Residues Glu-269, Arg-290, His-319, and Glu-346 each coordinate D-arabinonate.

Belongs to the mandelate racemase/muconate lactonizing enzyme family. GalD subfamily.

Functionally, has no detectable activity with D-mannonate and with a panel of 70 other acid sugars (in vitro), in spite of the conservation of the residues that are expected to be important for catalytic activity and cofactor binding. May have evolved a divergent function. The sequence is that of D-galactonate dehydratase family member Achl_0790 from Pseudarthrobacter chlorophenolicus (strain ATCC 700700 / DSM 12829 / CIP 107037 / JCM 12360 / KCTC 9906 / NCIMB 13794 / A6) (Arthrobacter chlorophenolicus).